The primary structure comprises 218 residues: Small ribosomal subunit protein uS3c (218 aa).

Residues 47–118 enclose the KH type-2 domain; that stretch reads VQKNIRISSG…KLNIAITRIS (72 aa).

This sequence belongs to the universal ribosomal protein uS3 family. As to quaternary structure, part of the 30S ribosomal subunit.

The protein localises to the plastid. It is found in the chloroplast. This Nasturtium officinale (Watercress) protein is Small ribosomal subunit protein uS3c (rps3).